Here is a 399-residue protein sequence, read N- to C-terminus: L-asparaginase-like protein GE13669 (399 aa).

The signal sequence occupies residues 1–22; sequence MLAQSCCLRLLILLLLFKSTCS. Intrachain disulfides connect Cys-90/Cys-95, Cys-189/Cys-205, and Cys-344/Cys-371.

The protein belongs to the Ntn-hydrolase family.

This Drosophila yakuba (Fruit fly) protein is L-asparaginase-like protein GE13669.